The following is a 409-amino-acid chain: Salivary endonuclease (409 aa).

The first 20 residues, 1–20, serve as a signal peptide directing secretion; it reads MHLQLNLCAILLSVLNGIQG. N37 and N102 each carry an N-linked (GlcNAc...) asparagine glycan. H216 acts as the Proton acceptor in catalysis. N246 provides a ligand contact to Mg(2+). N351 and N381 each carry an N-linked (GlcNAc...) asparagine glycan.

The protein belongs to the DNA/RNA non-specific endonuclease family. Mg(2+) is required as a cofactor. In terms of tissue distribution, salivary gland.

The protein resides in the secreted. Its function is as follows. Hydrolyzes single-stranded and double-stranded DNA with little sequence specificity. Inhibits contact pathway of blood coagulation in the host by preventing activation of coagulation factor XII (F12) triggered by soluble DNA. Modestly up-regulates expression of CSF2, CXCL1 and CXCL8 in cultured human dermal microvascular endothelial cells. At higher doses promotes host neutrophil recruitment at the injection site in mouse model. (Microbial infection) Increases Leishmania major survival in the host by disrupting parasite-induced neutrophil extracellular traps. Exacerbates L.major parasite infectivity and increases cutaneous lesions in mouse model. The polypeptide is Salivary endonuclease (Lutzomyia longipalpis (Sand fly)).